A 268-amino-acid chain; its full sequence is Small ribosomal subunit protein uS10m (268 aa).

Residues 1 to 64 constitute a mitochondrion transit peptide; sequence MIIRPVVRSL…RITTTTEAPK (64 aa).

Belongs to the universal ribosomal protein uS10 family. As to quaternary structure, component of the mitochondrial small ribosomal subunit (mt-SSU). Mature N.crassa 74S mitochondrial ribosomes consist of a small (37S) and a large (54S) subunit. The 37S small subunit contains a 16S ribosomal RNA (16S mt-rRNA) and 32 different proteins. The 54S large subunit contains a 23S rRNA (23S mt-rRNA) and 42 different proteins.

It localises to the mitochondrion. Functionally, component of the mitochondrial ribosome (mitoribosome), a dedicated translation machinery responsible for the synthesis of mitochondrial genome-encoded proteins, including at least some of the essential transmembrane subunits of the mitochondrial respiratory chain. The mitoribosomes are attached to the mitochondrial inner membrane and translation products are cotranslationally integrated into the membrane. This is Small ribosomal subunit protein uS10m (mrp-10) from Neurospora crassa (strain ATCC 24698 / 74-OR23-1A / CBS 708.71 / DSM 1257 / FGSC 987).